Here is a 272-residue protein sequence, read N- to C-terminus: Ribosomal RNA small subunit methyltransferase A (272 aa).

N27, L29, G54, E75, D97, and N117 together coordinate S-adenosyl-L-methionine.

It belongs to the class I-like SAM-binding methyltransferase superfamily. rRNA adenine N(6)-methyltransferase family. RsmA subfamily.

Its subcellular location is the cytoplasm. It catalyses the reaction adenosine(1518)/adenosine(1519) in 16S rRNA + 4 S-adenosyl-L-methionine = N(6)-dimethyladenosine(1518)/N(6)-dimethyladenosine(1519) in 16S rRNA + 4 S-adenosyl-L-homocysteine + 4 H(+). Specifically dimethylates two adjacent adenosines (A1518 and A1519) in the loop of a conserved hairpin near the 3'-end of 16S rRNA in the 30S particle. May play a critical role in biogenesis of 30S subunits. The polypeptide is Ribosomal RNA small subunit methyltransferase A (Malacoplasma penetrans (strain HF-2) (Mycoplasma penetrans)).